The chain runs to 190 residues: ATP synthase subunit delta (190 aa).

This sequence belongs to the ATPase delta chain family. As to quaternary structure, F-type ATPases have 2 components, F(1) - the catalytic core - and F(0) - the membrane proton channel. F(1) has five subunits: alpha(3), beta(3), gamma(1), delta(1), epsilon(1). F(0) has three main subunits: a(1), b(2) and c(10-14). The alpha and beta chains form an alternating ring which encloses part of the gamma chain. F(1) is attached to F(0) by a central stalk formed by the gamma and epsilon chains, while a peripheral stalk is formed by the delta and b chains.

The protein resides in the cell inner membrane. In terms of biological role, f(1)F(0) ATP synthase produces ATP from ADP in the presence of a proton or sodium gradient. F-type ATPases consist of two structural domains, F(1) containing the extramembraneous catalytic core and F(0) containing the membrane proton channel, linked together by a central stalk and a peripheral stalk. During catalysis, ATP synthesis in the catalytic domain of F(1) is coupled via a rotary mechanism of the central stalk subunits to proton translocation. Its function is as follows. This protein is part of the stalk that links CF(0) to CF(1). It either transmits conformational changes from CF(0) to CF(1) or is implicated in proton conduction. The sequence is that of ATP synthase subunit delta from Anaplasma marginale (strain Florida).